The following is a 336-amino-acid chain: DNA-directed RNA polymerase subunit alpha (336 aa).

The interval 1–226 (MLIAQRPTLS…ELFGLARELN (226 aa)) is alpha N-terminal domain (alpha-NTD). The alpha C-terminal domain (alpha-CTD) stretch occupies residues 243-336 (LAADMALPIE…SDDAFGDDEL (94 aa)).

The protein belongs to the RNA polymerase alpha chain family. As to quaternary structure, homodimer. The RNAP catalytic core consists of 2 alpha, 1 beta, 1 beta' and 1 omega subunit. When a sigma factor is associated with the core the holoenzyme is formed, which can initiate transcription.

The catalysed reaction is RNA(n) + a ribonucleoside 5'-triphosphate = RNA(n+1) + diphosphate. DNA-dependent RNA polymerase catalyzes the transcription of DNA into RNA using the four ribonucleoside triphosphates as substrates. In Renibacterium salmoninarum (strain ATCC 33209 / DSM 20767 / JCM 11484 / NBRC 15589 / NCIMB 2235), this protein is DNA-directed RNA polymerase subunit alpha.